The chain runs to 145 residues: D-aminoacyl-tRNA deacylase (145 aa).

The short motif at 137 to 138 (GP) is the Gly-cisPro motif, important for rejection of L-amino acids element.

It belongs to the DTD family. As to quaternary structure, homodimer.

Its subcellular location is the cytoplasm. The catalysed reaction is glycyl-tRNA(Ala) + H2O = tRNA(Ala) + glycine + H(+). It catalyses the reaction a D-aminoacyl-tRNA + H2O = a tRNA + a D-alpha-amino acid + H(+). In terms of biological role, an aminoacyl-tRNA editing enzyme that deacylates mischarged D-aminoacyl-tRNAs. Also deacylates mischarged glycyl-tRNA(Ala), protecting cells against glycine mischarging by AlaRS. Acts via tRNA-based rather than protein-based catalysis; rejects L-amino acids rather than detecting D-amino acids in the active site. By recycling D-aminoacyl-tRNA to D-amino acids and free tRNA molecules, this enzyme counteracts the toxicity associated with the formation of D-aminoacyl-tRNA entities in vivo and helps enforce protein L-homochirality. This is D-aminoacyl-tRNA deacylase from Rhodopirellula baltica (strain DSM 10527 / NCIMB 13988 / SH1).